The primary structure comprises 205 residues: Proteasome subunit beta type-3 (205 aa).

A Phosphoserine modification is found at serine 31. Lysine 70 participates in a covalent cross-link: Glycyl lysine isopeptide (Lys-Gly) (interchain with G-Cter in ubiquitin).

Belongs to the peptidase T1B family. The 26S proteasome consists of a 20S proteasome core and two 19S regulatory subunits. The 20S proteasome core is composed of 28 subunits that are arranged in four stacked rings, resulting in a barrel-shaped structure. The two end rings are each formed by seven alpha subunits, and the two central rings are each formed by seven beta subunits. The catalytic chamber with the active sites is on the inside of the barrel.

The protein localises to the cytoplasm. It is found in the nucleus. In terms of biological role, non-catalytic component of the proteasome which degrades poly-ubiquitinated proteins in the cytoplasm and in the nucleus. It is essential for the regulated turnover of proteins and for the removal of misfolded proteins. The proteasome is a multicatalytic proteinase complex that is characterized by its ability to cleave peptides with Arg, Phe, Tyr, Leu, and Glu adjacent to the leaving group at neutral or slightly basic pH. It has an ATP-dependent proteolytic activity. This subunit may participate in the trypsin-like activity of the enzyme complex. This is Proteasome subunit beta type-3 (PUP3) from Saccharomyces cerevisiae (strain ATCC 204508 / S288c) (Baker's yeast).